A 494-amino-acid chain; its full sequence is Probable cytosol aminopeptidase (494 aa).

Mn(2+) is bound by residues Lys-260 and Asp-265. Residue Lys-272 is part of the active site. Residues Asp-283, Asp-342, and Glu-344 each contribute to the Mn(2+) site. Arg-346 is an active-site residue.

This sequence belongs to the peptidase M17 family. It depends on Mn(2+) as a cofactor.

The protein localises to the cytoplasm. It catalyses the reaction Release of an N-terminal amino acid, Xaa-|-Yaa-, in which Xaa is preferably Leu, but may be other amino acids including Pro although not Arg or Lys, and Yaa may be Pro. Amino acid amides and methyl esters are also readily hydrolyzed, but rates on arylamides are exceedingly low.. The catalysed reaction is Release of an N-terminal amino acid, preferentially leucine, but not glutamic or aspartic acids.. Presumably involved in the processing and regular turnover of intracellular proteins. Catalyzes the removal of unsubstituted N-terminal amino acids from various peptides. The chain is Probable cytosol aminopeptidase from Bacillus cereus (strain ATCC 14579 / DSM 31 / CCUG 7414 / JCM 2152 / NBRC 15305 / NCIMB 9373 / NCTC 2599 / NRRL B-3711).